We begin with the raw amino-acid sequence, 363 residues long: Flagellar P-ring protein (363 aa).

The N-terminal stretch at 1 to 20 is a signal peptide; it reads MKLKLFLLSVLLLVSGSSQA.

This sequence belongs to the FlgI family. The basal body constitutes a major portion of the flagellar organelle and consists of four rings (L,P,S, and M) mounted on a central rod.

It localises to the periplasm. The protein resides in the bacterial flagellum basal body. Its function is as follows. Assembles around the rod to form the L-ring and probably protects the motor/basal body from shearing forces during rotation. This chain is Flagellar P-ring protein, found in Shewanella woodyi (strain ATCC 51908 / MS32).